The sequence spans 151 residues: Guanylate kinase homolog (151 aa).

The Guanylate kinase-like domain maps to 1–141 (MEREGVDYHY…AYSKLIQILQ (141 aa)).

It belongs to the guanylate kinase family.

The protein is Guanylate kinase homolog of Bos taurus (Bovine).